A 911-amino-acid polypeptide reads, in one-letter code: Zinc finger protein 721 (911 aa).

Residues 69 to 91 (FQCNARVKVFSKFANSNKDKTRH) form a C2H2-type 1; degenerate zinc finger. The segment at 97–119 (FKCNECGKSFQKFSDLTQHKGIH) adopts a C2H2-type 2 zinc-finger fold. A C2H2-type 3; degenerate zinc finger spans residues 125-147 (YTCEERGKDFGWYTDLNQHKKIH). The C2H2-type 4 zinc-finger motif lies at 153–175 (YKCEECGKAFNRSTNLTAHKRIH). Residues 181–203 (YTGEDRDRAFGWSTNLNEYKKIH) form a C2H2-type 5; degenerate zinc finger. 7 C2H2-type zinc fingers span residues 209–231 (YKCK…EKIH), 237–259 (YKCK…KRIH), 265–287 (FKCL…RRIH), 293–315 (YTCE…RRIH), 321–343 (YTCG…RRIH), 349–371 (YKCE…KKIH), and 377–399 (YKCE…KRIH). The C2H2-type 13; degenerate zinc-finger motif lies at 405–427 (YTCEDRGRAFGLSTNLNEYKKIH). 6 consecutive C2H2-type zinc fingers follow at residues 433–455 (YKCK…EKIH), 461–483 (YKCK…KRIH), 489–511 (FECL…RRIH), 517–539 (YTCE…RRIH), 545–567 (YTCE…RRIH), and 573–595 (YKCE…KKIH). Residue Lys478 forms a Glycyl lysine isopeptide (Lys-Gly) (interchain with G-Cter in SUMO2) linkage. A C2H2-type 20; degenerate zinc finger spans residues 601–623 (YKCEECGKDFVWYTDLNQQKKIY). The C2H2-type 21; degenerate zinc finger occupies 629–651 (YKCEECGKAFAPSTDLNQHTKIL). Lys649 is covalently cross-linked (Glycyl lysine isopeptide (Lys-Gly) (interchain with G-Cter in SUMO2)). 2 consecutive C2H2-type zinc fingers follow at residues 657 to 679 (YKCE…KKIH) and 685 to 707 (YKCE…RRVH). Residues 713-735 (YKCEDRGRSFGWSTNLNEYKKIH) form a C2H2-type 24; degenerate zinc finger. 6 consecutive C2H2-type zinc fingers follow at residues 741-763 (YKCK…EKIH), 769-791 (YKCK…KRIH), 797-819 (FKCL…RRIH), 825-847 (YTCE…RRIH), 853-875 (YTCG…KKIH), and 881-903 (YTCG…KKIH). A Glycyl lysine isopeptide (Lys-Gly) (interchain with G-Cter in SUMO2) cross-link involves residue Lys786.

Belongs to the krueppel C2H2-type zinc-finger protein family.

The protein localises to the nucleus. In terms of biological role, may be involved in transcriptional regulation. The protein is Zinc finger protein 721 (ZNF721) of Homo sapiens (Human).